Consider the following 374-residue polypeptide: (R)-phenyllactyl-CoA dehydratase beta subunit (374 aa).

Belongs to the FldB/FldC dehydratase alpha/beta subunit family. In terms of assembly, part of the heterotrimeric phenyllactate dehydratase complex FldABC, composed of (R)-phenyllactate CoA-transferase (FldA) and a heterodimeric (R)-phenyllactyl-CoA dehydratase (FldB and FldC). The cofactor is [4Fe-4S] cluster. No flavin could be detected in the FldABC complex, and the addition of FAD, FMN or riboflavin to the dehydratase do not increase enzymatic activity. serves as cofactor.

The enzyme catalyses (R)-3-phenyllactoyl-CoA = (E)-cinnamoyl-CoA + H2O. The catalysed reaction is (R)-3-(4-hydroxyphenyl)lactoyl-CoA = (E)-4-coumaroyl-CoA + H2O. It carries out the reaction (R)-3-(indol-3-yl)lactoyl-CoA = (E)-3-(indol-3-yl)acryloyl-CoA + H2O. It functions in the pathway amino-acid degradation; L-phenylalanine degradation. Functionally, component of the phenyllactate dehydratase complex FldABC that is involved in the fermentation of L-phenylalanine via a Stickland reaction. This complex catalyzes the reversible syn-dehydration of (R)-phenyllactate to (E)-cinnamate in two steps, a CoA-transfer from cinnamoyl-CoA to phenyllactate, catalyzed by FldA, followed by the dehydration of phenyllactyl-CoA to cinnamoyl-CoA, catalyzed by FldB and FldC. Requires the activator FldI to initiate catalysis. In Clostridium sporogenes, this protein is (R)-phenyllactyl-CoA dehydratase beta subunit.